We begin with the raw amino-acid sequence, 139 residues long: Cuticle protein 6 (139 aa).

A Pyrrolidone carboxylic acid modification is found at glutamine 1. Residues 31–92 (LGQFAFHHAG…VGANNLPEAP (62 aa)) enclose the Chitin-binding type R&amp;R domain.

This Blaberus craniifer (Death's head cockroach) protein is Cuticle protein 6.